Consider the following 299-residue polypeptide: ATP phosphoribosyltransferase (299 aa).

Belongs to the ATP phosphoribosyltransferase family. Long subfamily. Mg(2+) serves as cofactor.

It is found in the cytoplasm. The catalysed reaction is 1-(5-phospho-beta-D-ribosyl)-ATP + diphosphate = 5-phospho-alpha-D-ribose 1-diphosphate + ATP. It functions in the pathway amino-acid biosynthesis; L-histidine biosynthesis; L-histidine from 5-phospho-alpha-D-ribose 1-diphosphate: step 1/9. With respect to regulation, feedback inhibited by histidine. In terms of biological role, catalyzes the condensation of ATP and 5-phosphoribose 1-diphosphate to form N'-(5'-phosphoribosyl)-ATP (PR-ATP). Has a crucial role in the pathway because the rate of histidine biosynthesis seems to be controlled primarily by regulation of HisG enzymatic activity. The sequence is that of ATP phosphoribosyltransferase from Actinobacillus pleuropneumoniae serotype 7 (strain AP76).